A 157-amino-acid polypeptide reads, in one-letter code: Stalk-specific protein A (157 aa).

A signal peptide spans 1–19 (MRSILILLSLLLTIAFASA).

The protein localises to the secreted. The sequence is that of Stalk-specific protein A (staA) from Dictyostelium discoideum (Social amoeba).